Here is a 219-residue protein sequence, read N- to C-terminus: Thiamine-phosphate synthase (219 aa).

4-amino-2-methyl-5-(diphosphooxymethyl)pyrimidine-binding positions include 44–48 (QLREK) and Asn79. Mg(2+) contacts are provided by Asp80 and Asp99. Position 117 (Ser117) interacts with 4-amino-2-methyl-5-(diphosphooxymethyl)pyrimidine. A 2-[(2R,5Z)-2-carboxy-4-methylthiazol-5(2H)-ylidene]ethyl phosphate-binding site is contributed by 143–145 (TST). Lys146 contacts 4-amino-2-methyl-5-(diphosphooxymethyl)pyrimidine. 2-[(2R,5Z)-2-carboxy-4-methylthiazol-5(2H)-ylidene]ethyl phosphate contacts are provided by residues Gly175 and 195 to 196 (IS).

The protein belongs to the thiamine-phosphate synthase family. Mg(2+) is required as a cofactor.

It catalyses the reaction 2-[(2R,5Z)-2-carboxy-4-methylthiazol-5(2H)-ylidene]ethyl phosphate + 4-amino-2-methyl-5-(diphosphooxymethyl)pyrimidine + 2 H(+) = thiamine phosphate + CO2 + diphosphate. The catalysed reaction is 2-(2-carboxy-4-methylthiazol-5-yl)ethyl phosphate + 4-amino-2-methyl-5-(diphosphooxymethyl)pyrimidine + 2 H(+) = thiamine phosphate + CO2 + diphosphate. The enzyme catalyses 4-methyl-5-(2-phosphooxyethyl)-thiazole + 4-amino-2-methyl-5-(diphosphooxymethyl)pyrimidine + H(+) = thiamine phosphate + diphosphate. It participates in cofactor biosynthesis; thiamine diphosphate biosynthesis; thiamine phosphate from 4-amino-2-methyl-5-diphosphomethylpyrimidine and 4-methyl-5-(2-phosphoethyl)-thiazole: step 1/1. Functionally, condenses 4-methyl-5-(beta-hydroxyethyl)thiazole monophosphate (THZ-P) and 2-methyl-4-amino-5-hydroxymethyl pyrimidine pyrophosphate (HMP-PP) to form thiamine monophosphate (TMP). This chain is Thiamine-phosphate synthase, found in Bacillus mycoides (strain KBAB4) (Bacillus weihenstephanensis).